A 234-amino-acid chain; its full sequence is Golgi SNAP receptor complex member 1 (234 aa).

Topologically, residues 1-212 are cytoplasmic; the sequence is MSETWEALRK…MQKIKTKKQK (212 aa). The stretch at 54-121 forms a coiled coil; the sequence is VTTEIEGLIE…RDNVDQVLQR (68 aa). Residues 213-233 traverse the membrane as a helical; Anchor for type IV membrane protein segment; sequence NTMILAGVISACLIFTIFWII. N234 is a topological domain (vesicular).

Belongs to the GOSR1 family. Component of several multiprotein Golgi SNARE complexes.

It localises to the golgi apparatus membrane. Its function is as follows. Involved in transport from the ER to the Golgi apparatus as well as in intra-Golgi transport. It belongs to a super-family of proteins called t-SNAREs or soluble NSF (N-ethylmaleimide-sensitive factor) attachment protein receptor. Cooperates with ykt-6 for proper expression of Golgi-resident proteins. Required along with ykt-6 for normal embryonic development, seam cell division or differentiation, and ray formation. The polypeptide is Golgi SNAP receptor complex member 1 (Caenorhabditis briggsae).